We begin with the raw amino-acid sequence, 308 residues long: MSKLIYGLAGPTASGKTSLSILLAKKINAEIISVDSSLVYKGMDIGTAKPTLQEQDGIKHHLIDIIEPTGNFSVADFISSVNKLKKEIWARGREVLLVGGTMLYFKGLIEGLSALPESQAEIREALEYQKKAKGLQYLHQQLSEIDPQSAQKINPNDQQRIFRALEVIMISGKKYSELVKTSKVGGLDEELKLCALVPNDRSILHKNIESRFRQMLDQGFLDEVQNLRKNRMLTKETTAIRSVGYRQAWEYLDGDISYDEFVKKGIVATRQLAKRQLTWIRNWQSSINIVAMENETKELDILKYFGYK.

Glycine 10 to threonine 17 lines the ATP pocket. Threonine 12–threonine 17 lines the substrate pocket. Interaction with substrate tRNA stretches follow at residues aspartate 35–leucine 38 and glutamine 159–arginine 163.

The protein belongs to the IPP transferase family. In terms of assembly, monomer. It depends on Mg(2+) as a cofactor.

It catalyses the reaction adenosine(37) in tRNA + dimethylallyl diphosphate = N(6)-dimethylallyladenosine(37) in tRNA + diphosphate. In terms of biological role, catalyzes the transfer of a dimethylallyl group onto the adenine at position 37 in tRNAs that read codons beginning with uridine, leading to the formation of N6-(dimethylallyl)adenosine (i(6)A). This chain is tRNA dimethylallyltransferase, found in Francisella tularensis subsp. novicida (strain U112).